A 238-amino-acid chain; its full sequence is tRNA1(Val) (adenine(37)-N6)-methyltransferase (238 aa).

This sequence belongs to the methyltransferase superfamily. tRNA (adenine-N(6)-)-methyltransferase family.

The protein resides in the cytoplasm. It carries out the reaction adenosine(37) in tRNA1(Val) + S-adenosyl-L-methionine = N(6)-methyladenosine(37) in tRNA1(Val) + S-adenosyl-L-homocysteine + H(+). In terms of biological role, specifically methylates the adenine in position 37 of tRNA(1)(Val) (anticodon cmo5UAC). The sequence is that of tRNA1(Val) (adenine(37)-N6)-methyltransferase from Shewanella baltica (strain OS195).